The chain runs to 338 residues: Probable tRNA pseudouridine synthase B (338 aa).

D80 functions as the Nucleophile in the catalytic mechanism. One can recognise a PUA domain in the interval 247 to 322 (LPRIEIRDTA…IMVDTKRVLM (76 aa)).

This sequence belongs to the pseudouridine synthase TruB family. Type 2 subfamily.

The enzyme catalyses uridine(55) in tRNA = pseudouridine(55) in tRNA. Its function is as follows. Could be responsible for synthesis of pseudouridine from uracil-55 in the psi GC loop of transfer RNAs. The protein is Probable tRNA pseudouridine synthase B of Methanopyrus kandleri (strain AV19 / DSM 6324 / JCM 9639 / NBRC 100938).